The sequence spans 162 residues: HTH-type transcriptional regulator IscR (162 aa).

The HTH rrf2-type domain maps to 2–131 (RLTSKGRYAV…NNITLGELVN (130 aa)). A DNA-binding region (H-T-H motif) is located at residues 28–51 (LADISERQGISLSYLEQLFSRLRK). Residues Cys-92, Cys-98, and Cys-104 each contribute to the [2Fe-2S] cluster site. The tract at residues 141–162 (RQHNEAHRPTRAQDAIDVKLRA) is disordered.

[2Fe-2S] cluster serves as cofactor.

In terms of biological role, regulates the transcription of several operons and genes involved in the biogenesis of Fe-S clusters and Fe-S-containing proteins. The chain is HTH-type transcriptional regulator IscR from Cronobacter sakazakii (strain ATCC BAA-894) (Enterobacter sakazakii).